Reading from the N-terminus, the 272-residue chain is Regulatory protein RecX (272 aa).

This sequence belongs to the RecX family.

The protein resides in the cytoplasm. In terms of biological role, modulates RecA activity. This chain is Regulatory protein RecX, found in Staphylococcus aureus (strain Newman).